The sequence spans 1111 residues: NBPF family member NBPF9 (1111 aa).

The stretch at 70–130 (MLRNERQFKE…RSLNEHLQAL (61 aa)) forms a coiled coil. Positions 161–198 (KLSPENDEDEDEDVQVEEDEKVLESSAPREVQKAEESK) are disordered. Acidic residues predominate over residues 165-181 (ENDEDEDEDVQVEEDEK). Residues 165 to 259 (ENDEDEDEDV…ECQDALNILP (95 aa)) enclose the Olduvai 1 domain. Positions 341-401 (MLRNERQFKE…RSLNEHLQAL (61 aa)) form a coiled coil. 8 consecutive Olduvai domains span residues 436–528 (ENDN…HIIP), 529–600 (ENES…VDIG), 601–692 (RHRW…PSCP), 695–750 (SREL…LDLD), 751–843 (RIKK…RSKK), 844–919 (KRRR…LDVD), 920–1012 (RIKK…RSKK), and 1013–1111 (ERRR…IFPQ). Disordered regions lie at residues 451 to 474 (EKVQ…PEDS) and 510 to 569 (TLIG…STPS). Composition is skewed to acidic residues over residues 530-539 (NESDDEEEEE) and 550-562 (ESEE…ESWD). 2 disordered regions span residues 829-871 (KKGK…LDEK) and 999-1033 (KGKG…PRLN). Basic residues-rich tracts occupy residues 831–849 (GKGK…RRGR) and 1000–1018 (GKGK…RRGR).

The protein belongs to the NBPF family. As to expression, expressed in a neuroblastoma cell line.

It is found in the cytoplasm. The protein is NBPF family member NBPF9 of Homo sapiens (Human).